Consider the following 61-residue polypeptide: MPKIIEAIYENGVFKPLQKVDLKEGERVRVVVSEVVAKTRGLLKGCEMEEIIEEIESEGFL.

This sequence belongs to the UPF0165 family.

Functionally, possibly the antitoxin component of a type II toxin-antitoxin (TA) system. Its cognate toxin is VapC13 (Potential). This Archaeoglobus fulgidus (strain ATCC 49558 / DSM 4304 / JCM 9628 / NBRC 100126 / VC-16) protein is Putative antitoxin VapB13 (vapB13).